Consider the following 264-residue polypeptide: Major prion protein (264 aa).

The signal sequence occupies residues 1–24 (MVKSHIGSWILVLFVAMWSDVGLC). The tract at residues 25 to 241 (KKRPKPGGGW…ESEAYYQRGA (217 aa)) is interaction with GRB2, ERI3 and SYN1. Residues 28 to 118 (PKPGGGWNTG…QWNKPSKPKT (91 aa)) form a disordered region. 6 tandem repeats follow at residues 54–62 (SQGGGGWGQ), 63–70 (PHGGGWGQ), 71–78 (PHGGGWGQ), 79–86 (PHGGGWGQ), 87–94 (PHGGGWGQ), and 95–103 (PHGGGGWGQ). The 6 X 8 AA tandem repeats of P-H-G-G-G-W-G-Q stretch occupies residues 54–103 (SQGGGGWGQPHGGGWGQPHGGGWGQPHGGGWGQPHGGGWGQPHGGGGWGQ). A compositionally biased stretch (gly residues) spans 55–107 (QGGGGWGQPHGGGWGQPHGGGWGQPHGGGWGQPHGGGWGQPHGGGGWGQGGTH). Cu(2+)-binding residues include His-72, Gly-73, Gly-74, His-80, Gly-81, Gly-82, His-88, Gly-89, Gly-90, His-96, Gly-98, and Gly-99. A disulfide bond links Cys-190 and Cys-225. N-linked (GlcNAc...) asparagine glycosylation is found at Asn-192 and Asn-208. A lipid anchor (GPI-anchor amidated alanine) is attached at Ala-241. Positions 242–264 (SVILFSSPPVILLISFLIFLIVG) are cleaved as a propeptide — removed in mature form.

This sequence belongs to the prion family. Monomer and homodimer. Has a tendency to aggregate into amyloid fibrils containing a cross-beta spine, formed by a steric zipper of superposed beta-strands. Soluble oligomers may represent an intermediate stage on the path to fibril formation. Copper binding may promote oligomerization. Interacts with GRB2, APP, ERI3/PRNPIP and SYN1. Mislocalized cytosolically exposed PrP interacts with MGRN1; this interaction alters MGRN1 subcellular location and causes lysosomal enlargement. Interacts with KIAA1191.

Its subcellular location is the cell membrane. The protein resides in the golgi apparatus. In terms of biological role, its primary physiological function is unclear. Has cytoprotective activity against internal or environmental stresses. May play a role in neuronal development and synaptic plasticity. May be required for neuronal myelin sheath maintenance. May play a role in iron uptake and iron homeostasis. Soluble oligomers are toxic to cultured neuroblastoma cells and induce apoptosis (in vitro). Association with GPC1 (via its heparan sulfate chains) targets PRNP to lipid rafts. Also provides Cu(2+) or Zn(2+) for the ascorbate-mediated GPC1 deaminase degradation of its heparan sulfate side chains. This chain is Major prion protein (PRNP), found in Tragelaphus imberbis (Lesser kudu).